The sequence spans 224 residues: Imidazoleglycerol-phosphate dehydratase (224 aa).

The protein belongs to the imidazoleglycerol-phosphate dehydratase family.

The enzyme catalyses D-erythro-1-(imidazol-4-yl)glycerol 3-phosphate = 3-(imidazol-4-yl)-2-oxopropyl phosphate + H2O. It participates in amino-acid biosynthesis; L-histidine biosynthesis; L-histidine from 5-phospho-alpha-D-ribose 1-diphosphate: step 6/9. The sequence is that of Imidazoleglycerol-phosphate dehydratase (HIS3) from Cyberlindnera jadinii (Torula yeast).